We begin with the raw amino-acid sequence, 419 residues long: Putative BTB/POZ domain-containing protein L85 (419 aa).

A BTB domain is found at 16-89 (TDLTIVLKDD…FYDKTSTNSE (74 aa)). The tract at residues 250–290 (SSSNDSDEDASETESEHNSETESEHNSETESEHNSETESKH) is disordered. The span at 263–290 (ESEHNSETESEHNSETESEHNSETESKH) shows a compositional bias: basic and acidic residues.

Belongs to the mimivirus BTB/WD family.

The chain is Putative BTB/POZ domain-containing protein L85 from Acanthamoeba polyphaga (Amoeba).